The sequence spans 294 residues: Cytidine deaminase (294 aa).

CMP/dCMP-type deaminase domains are found at residues 48–168 and 186–294; these read DEDA…FGPK and LTGD…VLLA. A substrate-binding site is contributed by 89–91; that stretch reads NME. Histidine 102 is a binding site for Zn(2+). Glutamate 104 acts as the Proton donor in catalysis. Residues cysteine 129 and cysteine 132 each coordinate Zn(2+).

This sequence belongs to the cytidine and deoxycytidylate deaminase family. As to quaternary structure, homodimer. The cofactor is Zn(2+).

The catalysed reaction is cytidine + H2O + H(+) = uridine + NH4(+). It carries out the reaction 2'-deoxycytidine + H2O + H(+) = 2'-deoxyuridine + NH4(+). This enzyme scavenges exogenous and endogenous cytidine and 2'-deoxycytidine for UMP synthesis. The chain is Cytidine deaminase from Escherichia coli O7:K1 (strain IAI39 / ExPEC).